The sequence spans 488 residues: Tocopherol cyclase, chloroplastic (488 aa).

The N-terminal 76 residues, 1–76 (MEIRSLIVSM…VPTSPNRELR (76 aa)), are a transit peptide targeting the chloroplast.

It localises to the plastid. It is found in the chloroplast. The protein resides in the plastoglobule. It carries out the reaction delta-tocopherol = 2-methyl-6-phytyl-1,4-benzene-1,4-diol. The catalysed reaction is gamma-tocopherol = 2,3-dimethyl-6-phytylbenzene-1,4-diol. The enzyme catalyses delta-tocotrienol = 6-geranylgeranyl-2-methylbenzene-1,4-diol. It catalyses the reaction gamma-tocotrienol = 6-geranylgeranyl-2,3-dimethylbenzene-1,4-diol. It functions in the pathway cofactor biosynthesis; tocopherol biosynthesis. Involved in the synthesis of both tocopherols and tocotrienols (vitamin E), which presumably protect photosynthetic complexes from oxidative stress. Catalyzes the conversion of 2-methyl-6-phytyl-1,4-hydroquinone and 2,3-dimethyl-5-phytyl-1,4-hydroquinone (DMPQ) to delta- and gamma-tocopherol respectively. Also converts 2,3-dimethyl-5-geranylgeranyl-1,4-hydroquinone (DMGQ) to gamma-tocotrienol. This is Tocopherol cyclase, chloroplastic (VTE1) from Arabidopsis thaliana (Mouse-ear cress).